Reading from the N-terminus, the 402-residue chain is Propionate kinase (402 aa).

ATP contacts are provided by N11 and K18. Position 11 (N11) interacts with Mg(2+). Position 86 (R86) interacts with substrate. Catalysis depends on D143, which acts as the Proton donor/acceptor. Residues H175, 203–207, 278–280, and 326–330 each bind ATP; these read HLGNG, DLR, and GIGEN.

The protein belongs to the acetokinase family. TdcD subfamily. Homodimer. Requires Mg(2+) as cofactor.

The catalysed reaction is propanoate + ATP = propanoyl phosphate + ADP. The protein operates within amino-acid degradation; L-threonine degradation via propanoate pathway; propanoate from L-threonine: step 4/4. In terms of biological role, catalyzes the conversion of propionyl phosphate and ADP to propionate and ATP. In Salmonella typhimurium (strain D23580), this protein is Propionate kinase.